The sequence spans 526 residues: Putative bifunctional polymyxin resistance protein ArnA (526 aa).

Residues Met1–Leu170 form a formyltransferase ArnAFT region. Val2–Asp6 provides a ligand contact to (6R)-10-formyltetrahydrofolate. The interval Arg180–Ser526 is dehydrogenase ArnADH. NAD(+) contacts are provided by residues Asp213 and Asp234–Ile235. UDP-alpha-D-glucuronate-binding positions include Ala259, Tyr264, and Thr298–Ser299. Glu300 functions as the Proton acceptor; for decarboxylase activity in the catalytic mechanism. UDP-alpha-D-glucuronate is bound by residues Arg326, Asn358, Lys392–Arg401, and Tyr479. Arg485 functions as the Proton donor; for decarboxylase activity in the catalytic mechanism.

This sequence in the N-terminal section; belongs to the Fmt family. UDP-L-Ara4N formyltransferase subfamily. In the C-terminal section; belongs to the NAD(P)-dependent epimerase/dehydratase family. UDP-glucuronic acid decarboxylase subfamily. As to quaternary structure, homohexamer, formed by a dimer of trimers.

It carries out the reaction UDP-alpha-D-glucuronate + NAD(+) = UDP-beta-L-threo-pentopyranos-4-ulose + CO2 + NADH. The enzyme catalyses UDP-4-amino-4-deoxy-beta-L-arabinose + (6R)-10-formyltetrahydrofolate = UDP-4-deoxy-4-formamido-beta-L-arabinose + (6S)-5,6,7,8-tetrahydrofolate + H(+). Its pathway is nucleotide-sugar biosynthesis; UDP-4-deoxy-4-formamido-beta-L-arabinose biosynthesis; UDP-4-deoxy-4-formamido-beta-L-arabinose from UDP-alpha-D-glucuronate: step 1/3. It participates in nucleotide-sugar biosynthesis; UDP-4-deoxy-4-formamido-beta-L-arabinose biosynthesis; UDP-4-deoxy-4-formamido-beta-L-arabinose from UDP-alpha-D-glucuronate: step 3/3. The protein operates within bacterial outer membrane biogenesis; lipopolysaccharide biosynthesis. Its function is as follows. Bifunctional enzyme that catalyzes the oxidative decarboxylation of UDP-glucuronic acid (UDP-GlcUA) to UDP-4-keto-arabinose (UDP-Ara4O) and the addition of a formyl group to UDP-4-amino-4-deoxy-L-arabinose (UDP-L-Ara4N) to form UDP-L-4-formamido-arabinose (UDP-L-Ara4FN). The modified arabinose is attached to lipid A and is required for resistance to polymyxin and cationic antimicrobial peptides. The polypeptide is Putative bifunctional polymyxin resistance protein ArnA (arnA) (Shigella boydii serotype 18 (strain CDC 3083-94 / BS512)).